The sequence spans 243 residues: Protein IN2-1 (243 aa).

Residues 1–26 (MAAAAGPSSSVKESLPPALGSTSQPP) form a disordered region. In terms of domain architecture, GST N-terminal spans 31-112 (GTTRLYICYF…YIDSNFDGPA (82 aa)). Glutathione contacts are provided by residues lysine 70, valine 84, and 96 to 97 (ES). In terms of domain architecture, GST C-terminal spans 109-240 (DGPALLPEDA…FLLDLAKSHL (132 aa)).

It belongs to the GST superfamily. HSP26 family. Leaves and roots. It is more strongly induced in the leaves relative to the roots.

In Zea mays (Maize), this protein is Protein IN2-1 (IN2-1).